The primary structure comprises 604 residues: Elongation factor 4 (604 aa).

The tr-type G domain maps to 10 to 191; that stretch reads KNIRNFSIIA…KIITTIPAPS (182 aa). GTP contacts are provided by residues 22–27 and 138–141; these read DHGKST and NKID.

It belongs to the TRAFAC class translation factor GTPase superfamily. Classic translation factor GTPase family. LepA subfamily.

It localises to the cell inner membrane. The catalysed reaction is GTP + H2O = GDP + phosphate + H(+). Its function is as follows. Required for accurate and efficient protein synthesis under certain stress conditions. May act as a fidelity factor of the translation reaction, by catalyzing a one-codon backward translocation of tRNAs on improperly translocated ribosomes. Back-translocation proceeds from a post-translocation (POST) complex to a pre-translocation (PRE) complex, thus giving elongation factor G a second chance to translocate the tRNAs correctly. Binds to ribosomes in a GTP-dependent manner. This Helicobacter pylori (strain J99 / ATCC 700824) (Campylobacter pylori J99) protein is Elongation factor 4.